The primary structure comprises 568 residues: Poly(A) polymerase (568 aa).

ATP contacts are provided by residues 87-89 (YGS), 99-102 (SDID), 100-102 (DID), Asp-154, Lys-215, Tyr-224, and 233-234 (GV). Mg(2+) contacts are provided by Asp-100, Asp-102, and Asp-154. Ser-452 and Ser-550 each carry phosphoserine. A disordered region spans residues 525–568 (NEKRPSKKSKRKNLDARHETVKRSKSDAASGDNINGTTAAVDVN). Residues 536–550 (KNLDARHETVKRSKS) are compositionally biased toward basic and acidic residues.

The protein belongs to the poly(A) polymerase family. In terms of assembly, component of the cleavage and polyadenylation factor (CPF) complex, which is composed of PTI1, SYC1, SSU72, GLC7, MPE1, REF2, PFS2, PTA1, YSH1/BRR5, SWD2, CFT2/YDH1, YTH1, CFT1/YHH1, FIP1 and PAP1. Interacts with FIR1 and RRP6. Mg(2+) serves as cofactor. Requires Mn(2+) as cofactor.

It is found in the nucleus. It catalyses the reaction RNA(n) + ATP = RNA(n)-3'-adenine ribonucleotide + diphosphate. In terms of biological role, polymerase component of the cleavage and polyadenylation factor (CPF) complex, which plays a key role in polyadenylation-dependent pre-mRNA 3'-end formation and cooperates with cleavage factors including the CFIA complex and NAB4/CFIB. This Saccharomyces cerevisiae (strain ATCC 204508 / S288c) (Baker's yeast) protein is Poly(A) polymerase (PAP1).